A 439-amino-acid chain; its full sequence is MDQLTNHFHAHVAELNRRVAEIVARENLSGLVIHSGQPHRQFLDDMDYPFKVNPHFKAWLPILDNPHCWLLVNGRDKPQLIFYRPVDFWHKVADLPDEFWTAHVDIKLLTKADKVADLLPKDIVDWAYVGEHLDVAEVLGFKTRNPDAVMSYLHYHRATKTEYELACMRKSNEIAVKGHVAAKNAFYNGGSEFEIQQQYLMATNQGENEVPYGNIIALNRNASILHYTKLENQSPQPRRSFLIDAGANFFGYASDITRTYAFEKNIFSELIEAMDRAQLEIIDTMRPGVKYVDLHLATHQKVAQMLIDFDLATGDREGLIEQGITSVFFPHGLGHMLGLQVHDMGGFLHDERGTHIAAPDAHPFLRCTRTLAANQVLTIEPGLYIIDSLLQGLKQDNRQHQVNWNSVDLLRPFGGIRIEDNVIVHSDKNENMTRDLGLD.

The Mn(2+) site is built by D244, D255, H335, E380, and E419.

Belongs to the peptidase M24B family. Bacterial-type prolidase subfamily. Mn(2+) serves as cofactor.

The catalysed reaction is Xaa-L-Pro dipeptide + H2O = an L-alpha-amino acid + L-proline. Its function is as follows. Splits dipeptides with a prolyl residue in the C-terminal position. This is Xaa-Pro dipeptidase from Shewanella sediminis (strain HAW-EB3).